The sequence spans 425 residues: Glutamate-1-semialdehyde 2,1-aminomutase (425 aa).

Position 265 is an N6-(pyridoxal phosphate)lysine (lysine 265).

This sequence belongs to the class-III pyridoxal-phosphate-dependent aminotransferase family. HemL subfamily. Homodimer. Pyridoxal 5'-phosphate is required as a cofactor.

The protein localises to the cytoplasm. It carries out the reaction (S)-4-amino-5-oxopentanoate = 5-aminolevulinate. The protein operates within porphyrin-containing compound metabolism; protoporphyrin-IX biosynthesis; 5-aminolevulinate from L-glutamyl-tRNA(Glu): step 2/2. This chain is Glutamate-1-semialdehyde 2,1-aminomutase, found in Clostridium perfringens (strain 13 / Type A).